A 356-amino-acid polypeptide reads, in one-letter code: Methylthioribose-1-phosphate isomerase (356 aa).

Residues 53–55 (RGA), Arg97, and Gln203 each bind substrate. Asp244 acts as the Proton donor in catalysis. Residue 254–255 (NK) participates in substrate binding.

Belongs to the eIF-2B alpha/beta/delta subunits family. MtnA subfamily.

The catalysed reaction is 5-(methylsulfanyl)-alpha-D-ribose 1-phosphate = 5-(methylsulfanyl)-D-ribulose 1-phosphate. Its pathway is amino-acid biosynthesis; L-methionine biosynthesis via salvage pathway; L-methionine from S-methyl-5-thio-alpha-D-ribose 1-phosphate: step 1/6. Its function is as follows. Catalyzes the interconversion of methylthioribose-1-phosphate (MTR-1-P) into methylthioribulose-1-phosphate (MTRu-1-P). This chain is Methylthioribose-1-phosphate isomerase, found in Rhodopirellula baltica (strain DSM 10527 / NCIMB 13988 / SH1).